Reading from the N-terminus, the 435-residue chain is NAD-specific glutamate dehydrogenase A (435 aa).

Residues 1–28 form a disordered region; sequence MTMASKSDSTHDESGDEAADSTEPESAL. A compositionally biased stretch (acidic residues) spans 14-23; that stretch reads SGDEAADSTE. Lysine 126 is a catalytic residue.

Belongs to the Glu/Leu/Phe/Val dehydrogenases family. In terms of assembly, homohexamer. The N-terminus is blocked.

The enzyme catalyses L-glutamate + NAD(+) + H2O = 2-oxoglutarate + NH4(+) + NADH + H(+). Its activity is regulated as follows. Inhibited by ethanol, acetone, acetonitrile and 2-propanol (65 to 70% inhibition) and to a lesser extent by methanol and dimethyl formamide (26 and 49 % inhibition respectively). No effect of glycerol or DMSO. The protein is NAD-specific glutamate dehydrogenase A (gdhX) of Halobacterium salinarum (Halobacterium halobium).